The primary structure comprises 226 residues: Eukaryotic translation initiation factor 3 subunit K (226 aa).

One can recognise a PCI domain in the interval 44–202 (YSLEVNLCLL…IVLPQNEFNH (159 aa)).

It belongs to the eIF-3 subunit K family. Component of the eukaryotic translation initiation factor 3 (eIF-3) complex.

The protein localises to the cytoplasm. In terms of biological role, component of the eukaryotic translation initiation factor 3 (eIF-3) complex, which is involved in protein synthesis of a specialized repertoire of mRNAs and, together with other initiation factors, stimulates binding of mRNA and methionyl-tRNAi to the 40S ribosome. The eIF-3 complex specifically targets and initiates translation of a subset of mRNAs involved in cell proliferation. The chain is Eukaryotic translation initiation factor 3 subunit K (TIF3K1) from Arabidopsis thaliana (Mouse-ear cress).